The sequence spans 351 residues: Nicotinate-nucleotide--dimethylbenzimidazole phosphoribosyltransferase (351 aa).

The active-site Proton acceptor is E317.

This sequence belongs to the CobT family.

It carries out the reaction 5,6-dimethylbenzimidazole + nicotinate beta-D-ribonucleotide = alpha-ribazole 5'-phosphate + nicotinate + H(+). Its pathway is nucleoside biosynthesis; alpha-ribazole biosynthesis; alpha-ribazole from 5,6-dimethylbenzimidazole: step 1/2. Catalyzes the synthesis of alpha-ribazole-5'-phosphate from nicotinate mononucleotide (NAMN) and 5,6-dimethylbenzimidazole (DMB). In Pseudomonas fluorescens (strain ATCC BAA-477 / NRRL B-23932 / Pf-5), this protein is Nicotinate-nucleotide--dimethylbenzimidazole phosphoribosyltransferase.